The following is a 74-amino-acid chain: uncharacterized protein (74 aa).

This is an uncharacterized protein from Vaccinia virus (strain Copenhagen) (VACV).